The primary structure comprises 87 residues: Putative defensin-like protein 304 (87 aa).

An N-terminal signal peptide occupies residues M1–C19. 3 disulfides stabilise this stretch: C27/C46, C33/C51, and C40/C53.

The protein belongs to the DEFL family.

Its subcellular location is the secreted. This chain is Putative defensin-like protein 304, found in Arabidopsis thaliana (Mouse-ear cress).